We begin with the raw amino-acid sequence, 238 residues long: Cysteine-rich venom protein kaouthin-2 (238 aa).

The first 19 residues, 1–19, serve as a signal peptide directing secretion; sequence MIAFIVLLSLAAVLQQSSG. The propeptide occupies 20–25; sequence TVDFAS. In terms of domain architecture, SCP spans 38-164; that stretch reads VDKHNALRRS…SSKYLYVCQY (127 aa). 8 disulfides stabilise this stretch: C75-C153, C92-C165, C148-C162, C184-C191, C187-C196, C200-C233, C209-C227, and C218-C231. The ShKT domain occupies 200–233; sequence CKHHNVFSNCQSLAKQNACQTEWMKSKCAASCFC.

Expressed by the venom gland.

The protein localises to the secreted. The protein is Cysteine-rich venom protein kaouthin-2 of Naja kaouthia (Monocled cobra).